The following is a 526-amino-acid chain: Ribonuclease Y (526 aa).

The helical transmembrane segment at Ile-10–Ile-30 threads the bilayer. Residues Thr-216 to Leu-279 form the KH domain. The HD domain maps to Val-342–Ala-435.

It belongs to the RNase Y family.

The protein localises to the cell membrane. Functionally, endoribonuclease that initiates mRNA decay. This is Ribonuclease Y from Acholeplasma laidlawii (strain PG-8A).